A 90-amino-acid chain; its full sequence is c-Myc-binding protein homolog (90 aa).

The protein belongs to the AMY1 family.

It localises to the nucleus. In Dictyostelium discoideum (Social amoeba), this protein is c-Myc-binding protein homolog (mycbp).